Consider the following 570-residue polypeptide: Putative diflavin flavoprotein A 6 (570 aa).

The zinc metallo-hydrolase stretch occupies residues 38–231; that stretch reads AKGTTANSYL…FPTRLYATGH (194 aa). Residues 260-402 form the Flavodoxin-like domain; the sequence is VALIYASAYG…AGTDFAQALK (143 aa). A flavodoxin-reductase-like region spans residues 421–570; that stretch reads VGRIVGSLCV…VHHRKSGNHY (150 aa).

This sequence in the N-terminal section; belongs to the zinc metallo-hydrolase group 3 family. It in the C-terminal section; belongs to the flavodoxin reductase family. Fe cation serves as cofactor.

Functionally, mediates electron transfer from NADH to oxygen, reducing it to water. This modular protein has 3 redox cofactors, in other organisms the same activity requires 2 or 3 proteins. The protein is Putative diflavin flavoprotein A 6 (dfa6) of Nostoc sp. (strain PCC 7120 / SAG 25.82 / UTEX 2576).